The primary structure comprises 413 residues: Serine/threonine transporter SstT (413 aa).

9 helical membrane-spanning segments follow: residues 11–31 (IANG…VILA), 43–63 (FLGS…VFVL), 82–102 (IIGL…LFSF), 141–161 (ALLT…GITM), 192–212 (IGIF…ALAG), 216–236 (LLMV…PIIV), 298–318 (MGGA…TLGI), 339–359 (ASGV…LFGI), and 363–383 (VAMQ…SAET).

This sequence belongs to the dicarboxylate/amino acid:cation symporter (DAACS) (TC 2.A.23) family.

The protein localises to the cell inner membrane. It carries out the reaction L-serine(in) + Na(+)(in) = L-serine(out) + Na(+)(out). It catalyses the reaction L-threonine(in) + Na(+)(in) = L-threonine(out) + Na(+)(out). Functionally, involved in the import of serine and threonine into the cell, with the concomitant import of sodium (symport system). The polypeptide is Serine/threonine transporter SstT (Shewanella frigidimarina (strain NCIMB 400)).